A 408-amino-acid polypeptide reads, in one-letter code: Bifunctional enzyme IspD/IspF (408 aa).

The 2-C-methyl-D-erythritol 4-phosphate cytidylyltransferase stretch occupies residues 1–247 (MNAPFEKDRR…GPAMTELPDI (247 aa)). A 2-C-methyl-D-erythritol 2,4-cyclodiphosphate synthase region spans residues 248–408 (RVGNGYDVHG…TVAYPGSLGN (161 aa)). The a divalent metal cation site is built by Asp254 and His256. 4-CDP-2-C-methyl-D-erythritol 2-phosphate contacts are provided by residues 254–256 (DVH) and 280–281 (HS). An a divalent metal cation-binding site is contributed by His288. Residues 302 to 304 (DIG), 378 to 381 (TTNE), Phe385, and Arg388 each bind 4-CDP-2-C-methyl-D-erythritol 2-phosphate.

The protein in the N-terminal section; belongs to the IspD/TarI cytidylyltransferase family. IspD subfamily. It in the C-terminal section; belongs to the IspF family. It depends on a divalent metal cation as a cofactor.

The catalysed reaction is 2-C-methyl-D-erythritol 4-phosphate + CTP + H(+) = 4-CDP-2-C-methyl-D-erythritol + diphosphate. It carries out the reaction 4-CDP-2-C-methyl-D-erythritol 2-phosphate = 2-C-methyl-D-erythritol 2,4-cyclic diphosphate + CMP. The protein operates within isoprenoid biosynthesis; isopentenyl diphosphate biosynthesis via DXP pathway; isopentenyl diphosphate from 1-deoxy-D-xylulose 5-phosphate: step 2/6. It functions in the pathway isoprenoid biosynthesis; isopentenyl diphosphate biosynthesis via DXP pathway; isopentenyl diphosphate from 1-deoxy-D-xylulose 5-phosphate: step 4/6. Functionally, bifunctional enzyme that catalyzes the formation of 4-diphosphocytidyl-2-C-methyl-D-erythritol from CTP and 2-C-methyl-D-erythritol 4-phosphate (MEP) (IspD), and catalyzes the conversion of 4-diphosphocytidyl-2-C-methyl-D-erythritol 2-phosphate (CDP-ME2P) to 2-C-methyl-D-erythritol 2,4-cyclodiphosphate (ME-CPP) with a corresponding release of cytidine 5-monophosphate (CMP) (IspF). The protein is Bifunctional enzyme IspD/IspF of Chelativorans sp. (strain BNC1).